The chain runs to 153 residues: Large ribosomal subunit protein uL15 (153 aa).

Belongs to the universal ribosomal protein uL15 family. As to quaternary structure, part of the 50S ribosomal subunit.

Functionally, binds to the 23S rRNA. The chain is Large ribosomal subunit protein uL15 from Pelagibacter ubique (strain HTCC1062).